The following is a 279-amino-acid chain: Probable cyclic nucleotide phosphodiesterase Psyc_2036 (279 aa).

7 residues coordinate Fe cation: Asp-23, His-25, Asp-70, Asn-100, His-179, His-218, and His-220. AMP is bound by residues His-25, Asp-70, and 100–101 (NH). His-220 serves as a coordination point for AMP.

The protein belongs to the cyclic nucleotide phosphodiesterase class-III family. Fe(2+) is required as a cofactor.

The polypeptide is Probable cyclic nucleotide phosphodiesterase Psyc_2036 (Psychrobacter arcticus (strain DSM 17307 / VKM B-2377 / 273-4)).